Reading from the N-terminus, the 567-residue chain is Inactive protein kinase SELMODRAFT_444075 (567 aa).

The segment at 148–206 (NETRRKGPSPSEVLNSTTSSPASHKPQVLNDFLRMKESREYTEETDTQRNVSRPVDRVS) is disordered. Over residues 159 to 169 (EVLNSTTSSPA) the composition is skewed to polar residues. Positions 180 to 189 (LRMKESREYT) are enriched in basic and acidic residues. A compositionally biased stretch (low complexity) spans 196–206 (RNVSRPVDRVS). The Protein kinase domain maps to 255 to 487 (FSDVNFLAEG…EGDSLSDTSL (233 aa)). Residues 261–269 (LAEGGYGSV) and Lys283 contribute to the ATP site. Residues 511–538 (DSSSSRSSSASSVLKSFSRTQHSSRSSS) are compositionally biased toward low complexity. Residues 511-567 (DSSSSRSSSASSVLKSFSRTQHSSRSSSNAGSPLNPAATQALAFKKYNKNTTRHTQD) are disordered. Residues 556–567 (KYNKNTTRHTQD) show a composition bias toward basic residues.

The polypeptide is Inactive protein kinase SELMODRAFT_444075 (Selaginella moellendorffii (Spikemoss)).